The following is a 108-amino-acid chain: DNA-directed RNA polymerase subunit omega (108 aa).

The tract at residues 1 to 32 (MTNSQSDAALAAVPDRFDPSAGGPGAYDTPLG) is disordered.

This sequence belongs to the RNA polymerase subunit omega family. As to quaternary structure, the RNAP catalytic core consists of 2 alpha, 1 beta, 1 beta' and 1 omega subunit. When a sigma factor is associated with the core the holoenzyme is formed, which can initiate transcription.

It carries out the reaction RNA(n) + a ribonucleoside 5'-triphosphate = RNA(n+1) + diphosphate. Promotes RNA polymerase assembly. Latches the N- and C-terminal regions of the beta' subunit thereby facilitating its interaction with the beta and alpha subunits. This chain is DNA-directed RNA polymerase subunit omega, found in Mycobacterium avium (strain 104).